The following is a 258-amino-acid chain: Tryptophan synthase alpha chain (258 aa).

Residues Glu52 and Asp63 each act as proton acceptor in the active site.

Belongs to the TrpA family. As to quaternary structure, tetramer of two alpha and two beta chains.

The enzyme catalyses (1S,2R)-1-C-(indol-3-yl)glycerol 3-phosphate + L-serine = D-glyceraldehyde 3-phosphate + L-tryptophan + H2O. It functions in the pathway amino-acid biosynthesis; L-tryptophan biosynthesis; L-tryptophan from chorismate: step 5/5. Functionally, the alpha subunit is responsible for the aldol cleavage of indoleglycerol phosphate to indole and glyceraldehyde 3-phosphate. The protein is Tryptophan synthase alpha chain of Streptococcus pneumoniae serotype 2 (strain D39 / NCTC 7466).